Here is a 212-residue protein sequence, read N- to C-terminus: Ras-related protein Rab-43 (212 aa).

25-32 serves as a coordination point for GTP; the sequence is GDASVGKT. The Effector region signature appears at 47 to 55; the sequence is QGSTIGVDF. Ser-49 is modified (phosphoserine). 73–77 is a binding site for GTP; it reads DTAGQ. The residue at position 82 (Thr-82) is a Phosphothreonine; by LRRK2. GTP-binding positions include 131–134 and 163–164; these read NKSD and AK. At Ser-193 the chain carries Phosphoserine. 2 S-geranylgeranyl cysteine lipidation sites follow: Cys-210 and Cys-212. Residue Cys-212 is modified to Cysteine methyl ester.

Belongs to the small GTPase superfamily. Rab family. In terms of assembly, interacts with GDI1, GDI2, CHM and CHML; phosphorylation at Thr-82 disrupts these interactions. In terms of tissue distribution, widely expressed in brain, testis, lung, heart, ovary, colon, kidney, uterus and spleen but not in liver.

Its subcellular location is the cytoplasmic vesicle. The protein localises to the phagosome. It is found in the phagosome membrane. The protein resides in the golgi apparatus. It localises to the trans-Golgi network membrane. Its subcellular location is the trans-Golgi network. In terms of biological role, the small GTPases Rab are key regulators of intracellular membrane trafficking, from the formation of transport vesicles to their fusion with membranes. Rabs cycle between an inactive GDP-bound form and an active GTP-bound form that is able to recruit to membranes different set of downstream effectors directly responsible for vesicle formation, movement, tethering and fusion. The low intrinsic GTPase activity of RAB43 is activated by USP6NL. Involved in retrograde transport from the endocytic pathway to the Golgi apparatus. Involved in the transport of Shiga toxin from early and recycling endosomes to the trans-Golgi network. Required for the structural integrity of the Golgi complex. Plays a role in the maturation of phagosomes that engulf pathogens, such as S.aureus and M.tuberculosis. The chain is Ras-related protein Rab-43 (RAB43) from Homo sapiens (Human).